Here is a 590-residue protein sequence, read N- to C-terminus: Membrane protein insertase YidC (590 aa).

Transmembrane regions (helical) follow at residues 5–25 (SVIG…FMKP), 368–388 (GLII…LSLA), 433–453 (LGGC…FYVF), 483–503 (LPLY…TVFF), and 519–539 (IMMW…PAGL).

It belongs to the OXA1/ALB3/YidC family. Type 1 subfamily. Interacts with the Sec translocase complex via SecD. Specifically interacts with transmembrane segments of nascent integral membrane proteins during membrane integration.

It is found in the cell inner membrane. Functionally, required for the insertion and/or proper folding and/or complex formation of integral membrane proteins into the membrane. Involved in integration of membrane proteins that insert both dependently and independently of the Sec translocase complex, as well as at least some lipoproteins. Aids folding of multispanning membrane proteins. This chain is Membrane protein insertase YidC, found in Chlorobaculum tepidum (strain ATCC 49652 / DSM 12025 / NBRC 103806 / TLS) (Chlorobium tepidum).